Reading from the N-terminus, the 296-residue chain is Glycine N-acyltransferase (296 aa).

Position 16 is an N6-acetyllysine; alternate (Lys16). N6-succinyllysine; alternate is present on Lys16. Lys113 bears the N6-acetyllysine mark. N6-acetyllysine; alternate is present on residues Lys127, Lys141, and Lys142. 3 positions are modified to N6-succinyllysine; alternate: Lys127, Lys141, and Lys142. Lys159 and Lys167 each carry N6-acetyllysine. Lys169 is modified (N6-succinyllysine). N6-acetyllysine; alternate is present on residues Lys183 and Lys256. An N6-succinyllysine; alternate mark is found at Lys183 and Lys256. Lys267 carries the post-translational modification N6-succinyllysine.

This sequence belongs to the glycine N-acyltransferase family.

Its subcellular location is the mitochondrion. It carries out the reaction an acyl-CoA + glycine = an N-acylglycine + CoA + H(+). The catalysed reaction is benzoyl-CoA + glycine = N-benzoylglycine + CoA + H(+). Its function is as follows. Mitochondrial acyltransferase which transfers an acyl group to the N-terminus of glycine and glutamine, although much less efficiently. Can conjugate a multitude of substrates to form a variety of N-acylglycines, thereby detoxify xenobiotics, such as benzoic acid or salicylic acid, and endogenous organic acids, such as isovaleric acid. This is Glycine N-acyltransferase (Glyat) from Mus musculus (Mouse).